We begin with the raw amino-acid sequence, 931 residues long: Dual serine/threonine and tyrosine protein kinase (931 aa).

The disordered stretch occupies residues 1–24 (MEGDAPQRVSERVSGPGPGGGGGG). The stretch at 397–424 (RKKENELYESLMNIANRKQEEMKDMICE) forms a coiled coil. The Protein kinase domain maps to 654–908 (PKLGQELGRG…PLLGIVQPML (255 aa)). Residues 660–668 (LGRGQYGVV) and Lys-683 contribute to the ATP site. Asp-779 (proton acceptor) is an active-site residue.

This sequence belongs to the protein kinase superfamily. Ser/Thr protein kinase family.

It localises to the cytoplasm. Its subcellular location is the cell membrane. The protein localises to the apical cell membrane. The protein resides in the basolateral cell membrane. It is found in the cell junction. The catalysed reaction is L-seryl-[protein] + ATP = O-phospho-L-seryl-[protein] + ADP + H(+). It carries out the reaction L-threonyl-[protein] + ATP = O-phospho-L-threonyl-[protein] + ADP + H(+). The enzyme catalyses L-tyrosyl-[protein] + ATP = O-phospho-L-tyrosyl-[protein] + ADP + H(+). Acts as a positive regulator of ERK phosphorylation downstream of fibroblast growth factor-receptor activation. Involved in the regulation of both caspase-dependent apoptosis and caspase-independent cell death. In the skin, it plays a predominant role in suppressing caspase-dependent apoptosis in response to UV stress in a range of dermal cell types. The sequence is that of Dual serine/threonine and tyrosine protein kinase (DSTYK) from Canis lupus familiaris (Dog).